Consider the following 308-residue polypeptide: Glycosyltransferase 6 domain-containing protein 1 (308 aa).

Topologically, residues 1–6 (MNSKRM) are cytoplasmic. The chain crosses the membrane as a helical; Signal-anchor for type II membrane protein span at residues 7–23 (LLLVLFAFSLMLVERYF). At 24–308 (RNHQVEELRL…KVAHDSHRKL (285 aa)) the chain is on the lumenal side. A glycan (N-linked (GlcNAc...) asparagine) is linked at Asn-74. Substrate contacts are provided by residues 82 to 87 (FATGRF), 173 to 175 (AVN), and 195 to 198 (HAWW). The active-site Nucleophile is Glu-263.

It belongs to the glycosyltransferase 6 family. It depends on Mn(2+) as a cofactor.

The protein localises to the membrane. The chain is Glycosyltransferase 6 domain-containing protein 1 (GLT6D1) from Macaca fascicularis (Crab-eating macaque).